A 565-amino-acid chain; its full sequence is NAD-dependent malic enzyme (565 aa).

The Proton donor role is filled by Tyr104. Arg157 contacts NAD(+). Lys175 (proton acceptor) is an active-site residue. Positions 246, 247, and 270 each coordinate a divalent metal cation. Residues Asp270 and Asn418 each coordinate NAD(+).

It belongs to the malic enzymes family. As to quaternary structure, homotetramer. Mg(2+) serves as cofactor. Requires Mn(2+) as cofactor.

It carries out the reaction (S)-malate + NAD(+) = pyruvate + CO2 + NADH. The enzyme catalyses oxaloacetate + H(+) = pyruvate + CO2. This is NAD-dependent malic enzyme from Yersinia pseudotuberculosis serotype O:1b (strain IP 31758).